A 387-amino-acid chain; its full sequence is GDSL esterase/lipase At2g23540 (387 aa).

The N-terminal stretch at 1–32 is a signal peptide; that stretch reads MATRASTSSRVSPAFTFLVIFFLLSLTASVEA. Ser-55 acts as the Nucleophile in catalysis. Residues Asn-139 and Asn-159 are each glycosylated (N-linked (GlcNAc...) asparagine). Catalysis depends on residues Asp-352 and His-355. N-linked (GlcNAc...) asparagine glycosylation occurs at Asn-380.

The protein belongs to the 'GDSL' lipolytic enzyme family.

The protein localises to the secreted. The polypeptide is GDSL esterase/lipase At2g23540 (Arabidopsis thaliana (Mouse-ear cress)).